A 60-amino-acid polypeptide reads, in one-letter code: Large ribosomal subunit protein uL30 (60 aa).

This sequence belongs to the universal ribosomal protein uL30 family. As to quaternary structure, part of the 50S ribosomal subunit.

The polypeptide is Large ribosomal subunit protein uL30 (Lysinibacillus sphaericus (strain C3-41)).